Consider the following 156-residue polypeptide: Cyanate hydratase (156 aa).

Residues arginine 96, glutamate 99, and serine 122 contribute to the active site.

It belongs to the cyanase family.

It catalyses the reaction cyanate + hydrogencarbonate + 3 H(+) = NH4(+) + 2 CO2. Catalyzes the reaction of cyanate with bicarbonate to produce ammonia and carbon dioxide. The protein is Cyanate hydratase of Pseudomonas paraeruginosa (strain DSM 24068 / PA7) (Pseudomonas aeruginosa (strain PA7)).